A 466-amino-acid chain; its full sequence is Uronate isomerase (466 aa).

The protein belongs to the metallo-dependent hydrolases superfamily. Uronate isomerase family.

It carries out the reaction D-glucuronate = D-fructuronate. The enzyme catalyses aldehydo-D-galacturonate = keto-D-tagaturonate. The protein operates within carbohydrate metabolism; pentose and glucuronate interconversion. The protein is Uronate isomerase of Caldanaerobacter subterraneus subsp. tengcongensis (strain DSM 15242 / JCM 11007 / NBRC 100824 / MB4) (Thermoanaerobacter tengcongensis).